The primary structure comprises 427 residues: UPF0229 protein YeaH (427 aa).

The segment at Arg87–Glu110 is disordered. The segment covering Gln92–Gln102 has biased composition (gly residues).

This sequence belongs to the UPF0229 family.

This is UPF0229 protein YeaH from Escherichia coli O6:K15:H31 (strain 536 / UPEC).